The sequence spans 638 residues: 1-deoxy-D-xylulose-5-phosphate synthase (638 aa).

Residues histidine 79 and 120–122 (AHS) each bind thiamine diphosphate. Aspartate 151 contributes to the Mg(2+) binding site. Residues 152–153 (GA), asparagine 180, tyrosine 289, and glutamate 371 contribute to the thiamine diphosphate site. Asparagine 180 serves as a coordination point for Mg(2+).

Belongs to the transketolase family. DXPS subfamily. As to quaternary structure, homodimer. Requires Mg(2+) as cofactor. Thiamine diphosphate serves as cofactor.

It carries out the reaction D-glyceraldehyde 3-phosphate + pyruvate + H(+) = 1-deoxy-D-xylulose 5-phosphate + CO2. It participates in metabolic intermediate biosynthesis; 1-deoxy-D-xylulose 5-phosphate biosynthesis; 1-deoxy-D-xylulose 5-phosphate from D-glyceraldehyde 3-phosphate and pyruvate: step 1/1. Catalyzes the acyloin condensation reaction between C atoms 2 and 3 of pyruvate and glyceraldehyde 3-phosphate to yield 1-deoxy-D-xylulose-5-phosphate (DXP). The sequence is that of 1-deoxy-D-xylulose-5-phosphate synthase from Rhizobium etli (strain ATCC 51251 / DSM 11541 / JCM 21823 / NBRC 15573 / CFN 42).